Reading from the N-terminus, the 215-residue chain is Chaperone protein TorD (215 aa).

This sequence belongs to the TorD/DmsD family. TorD subfamily.

It is found in the cytoplasm. Its function is as follows. Involved in the biogenesis of TorA. Acts on TorA before the insertion of the molybdenum cofactor and, as a result, probably favors a conformation of the apoenzyme that is competent for acquiring the cofactor. In Vibrio vulnificus (strain CMCP6), this protein is Chaperone protein TorD.